The primary structure comprises 154 residues: Terephthalate 1,2-dioxygenase, terminal oxygenase component subunit beta 1 (154 aa).

This sequence belongs to the bacterial ring-hydroxylating dioxygenase beta subunit family. As to quaternary structure, heterotetramer composed of 2 alpha (TphA2I and TphA2II) and 2 beta (TphA3I and TphA3II) subunits. Part of a multicomponent enzyme system composed of a reductase (TphA1I or TphA1II) and a two-subunit oxygenase component (TphA2I or TphA2II and TphA3I or TphA3II). Fe cation serves as cofactor.

The enzyme catalyses terephthalate + NADH + O2 + H(+) = (3S,4R)-3,4-dihydroxycyclohexa-1,5-diene-1,4-dicarboxylate + NAD(+). Inhibited by EDTA. Functionally, component of the terephthalate 1,2-dioxygenase multicomponent enzyme system which catalyzes the dioxygenation of terephthalate (TER/TPA) to 1,2-dihydroxy-3,5-cyclohexadiene-1,4-dicarboxylic acid (DCD). It can also use 2,5-dicarboxypyridine (PDC) and 1,4-napthalenedicarboxylic acid (NDC) as substrates, and preferentially uses NADPH which is the physiological electron donor. This chain is Terephthalate 1,2-dioxygenase, terminal oxygenase component subunit beta 1 (tphA3I), found in Comamonas sp.